The chain runs to 61 residues: Large ribosomal subunit protein bL32 (61 aa).

Residues 1–16 (MAVPKRKTSPSKRGMR) show a composition bias toward basic residues. Positions 1 to 35 (MAVPKRKTSPSKRGMRRSADGLKSATYVEDKNSGE) are disordered.

This sequence belongs to the bacterial ribosomal protein bL32 family.

The protein is Large ribosomal subunit protein bL32 of Agrobacterium fabrum (strain C58 / ATCC 33970) (Agrobacterium tumefaciens (strain C58)).